The sequence spans 694 residues: Elongation factor G (694 aa).

A tr-type G domain is found at 10-285 (EKTRNIGIMA…GVVDYLPSPL (276 aa)). GTP is bound by residues 19 to 26 (AHIDAGKT), 83 to 87 (DTPGH), and 137 to 140 (NKMD).

Belongs to the TRAFAC class translation factor GTPase superfamily. Classic translation factor GTPase family. EF-G/EF-2 subfamily.

Its subcellular location is the cytoplasm. Catalyzes the GTP-dependent ribosomal translocation step during translation elongation. During this step, the ribosome changes from the pre-translocational (PRE) to the post-translocational (POST) state as the newly formed A-site-bound peptidyl-tRNA and P-site-bound deacylated tRNA move to the P and E sites, respectively. Catalyzes the coordinated movement of the two tRNA molecules, the mRNA and conformational changes in the ribosome. The polypeptide is Elongation factor G (Lactobacillus delbrueckii subsp. bulgaricus (strain ATCC BAA-365 / Lb-18)).